Here is a 93-residue protein sequence, read N- to C-terminus: Putative septation protein SpoVG (93 aa).

Belongs to the SpoVG family.

Could be involved in septation. The sequence is that of Putative septation protein SpoVG from Treponema denticola (strain ATCC 35405 / DSM 14222 / CIP 103919 / JCM 8153 / KCTC 15104).